The chain runs to 501 residues: UPF0616 protein C1687.04 (501 aa).

Belongs to the UPF0616 family.

The protein localises to the cytoplasm. It is found in the nucleus. This is UPF0616 protein C1687.04 from Schizosaccharomyces pombe (strain 972 / ATCC 24843) (Fission yeast).